A 214-amino-acid polypeptide reads, in one-letter code: Tungstate uptake system ATP-binding protein TupC (214 aa).

Positions Ile3–Phe214 constitute an ABC transporter domain. Gly35–Thr42 lines the ATP pocket.

This sequence belongs to the ABC transporter superfamily. In terms of assembly, the complex is composed of two ATP-binding proteins (TupC), two transmembrane proteins (TupB) and a solute-binding protein (TupA).

It catalyses the reaction tungstate(in) + ATP + H2O = tungstate(out) + ADP + phosphate + H(+). Part of an ABC transporter complex involved in tungstate uptake. Probably responsible for energy coupling to the transport system. The polypeptide is Tungstate uptake system ATP-binding protein TupC (Peptoclostridium acidaminophilum (Eubacterium acidaminophilum)).